The following is a 413-amino-acid chain: Tubby-like F-box protein 6 (413 aa).

Residues 67–122 (SIWVDLPPELLLDIIQRIESEQSLWPGRRDVVACASVCKSWREMTKEVVKVPELSG) form the F-box domain.

Belongs to the TUB family. Ubiquitous, with higher levels in flowers.

The chain is Tubby-like F-box protein 6 from Arabidopsis thaliana (Mouse-ear cress).